The chain runs to 441 residues: Alpha-methylserine aldolase (441 aa).

K256 bears the N6-(pyridoxal phosphate)lysine mark.

The protein belongs to the SHMT family. Alpha-methylserine aldolase subfamily. As to quaternary structure, homodimer. Pyridoxal 5'-phosphate is required as a cofactor.

The catalysed reaction is 2-methyl-L-serine = formaldehyde + L-alanine. Catalyzes the reversible interconversion of alpha-methyl-L-serine to L-alanine and formaldehyde. The sequence is that of Alpha-methylserine aldolase from Variovorax paradoxus.